Here is a 240-residue protein sequence, read N- to C-terminus: EF-hand domain-containing protein D2 (240 aa).

At alanine 2 the chain carries N-acetylalanine. Serine 11 carries the phosphoserine modification. The disordered stretch occupies residues 13 to 38 (RLQMEGEGGGETPEQPGLNGAAAAAA). A phosphoserine mark is found at serine 74 and serine 76. Tyrosine 83 is modified (phosphotyrosine). 2 EF-hand domains span residues 92–127 (KQIKDMEKMFKQYDAGRDGFIDLMELKLMMEKLGAP) and 128–163 (QTHLGLKNMIKEVDEDFDSKLSFREFLLIFRKAAAG). The Ca(2+) site is built by aspartate 105, aspartate 109, glutamate 116, aspartate 141, aspartate 143, aspartate 145, lysine 147, and glutamate 152. Lysine 233 carries the N6-acetyllysine modification.

Interacts with CASP9; with inactive form. As to expression, found in lymphocytes; preferentially expressed in CD8+ cells.

The protein resides in the membrane raft. Functionally, may regulate B-cell receptor (BCR)-induced immature and primary B-cell apoptosis. Plays a role as negative regulator of the canonical NF-kappa-B-activating branch. Controls spontaneous apoptosis through the regulation of BCL2L1 abundance. In Homo sapiens (Human), this protein is EF-hand domain-containing protein D2 (EFHD2).